Reading from the N-terminus, the 158-residue chain is NADH-quinone oxidoreductase subunit B 2 (158 aa).

Residues cysteine 37, cysteine 38, cysteine 102, and cysteine 132 each contribute to the [4Fe-4S] cluster site.

This sequence belongs to the complex I 20 kDa subunit family. As to quaternary structure, NDH-1 is composed of 14 different subunits. Subunits NuoB, C, D, E, F, and G constitute the peripheral sector of the complex. [4Fe-4S] cluster serves as cofactor.

It localises to the cell inner membrane. It catalyses the reaction a quinone + NADH + 5 H(+)(in) = a quinol + NAD(+) + 4 H(+)(out). NDH-1 shuttles electrons from NADH, via FMN and iron-sulfur (Fe-S) centers, to quinones in the respiratory chain. Couples the redox reaction to proton translocation (for every two electrons transferred, four hydrogen ions are translocated across the cytoplasmic membrane), and thus conserves the redox energy in a proton gradient. The sequence is that of NADH-quinone oxidoreductase subunit B 2 from Nitrosospira multiformis (strain ATCC 25196 / NCIMB 11849 / C 71).